A 79-amino-acid polypeptide reads, in one-letter code: Short neurotoxin 3 (79 aa).

The signal sequence occupies residues 1 to 23 (MKTLLLTLVVMTIVCLDLGYTLT). 4 cysteine pairs are disulfide-bonded: C24-C41, C34-C59, C63-C71, and C72-C77.

This sequence belongs to the three-finger toxin family. Short-chain subfamily. Expressed by the venom gland.

The protein resides in the secreted. The chain is Short neurotoxin 3 from Oxyuranus scutellatus scutellatus (Australian taipan).